The sequence spans 391 residues: GATA-binding factor 6-B (391 aa).

Over residues 57 to 69 (GTHSVNSHWSQAT) the composition is skewed to polar residues. A disordered region spans residues 57 to 107 (GTHSVNSHWSQATSESSSYSSSSPHPSSRYHYSPSPPMANGSTRDTGYSSS). The segment covering 70–89 (SESSSYSSSSPHPSSRYHYS) has biased composition (low complexity). Residues 96-107 (NGSTRDTGYSSS) show a composition bias toward polar residues. 2 consecutive GATA-type zinc fingers follow at residues 182 to 206 (CVNC…CNAC) and 236 to 260 (CANC…CNAC). The disordered stretch occupies residues 277–334 (KEGIQTRKRKPKNLNKSKSSSSNGNSSHHITMTPTSTTSSTNSDDCIKNGSPSQNTAP). Over residues 282–291 (TRKRKPKNLN) the composition is skewed to basic residues. Residues 292-319 (KSKSSSSNGNSSHHITMTPTSTTSSTNS) are compositionally biased toward low complexity.

In embryos, expressed in the presumptive heart mesoderm. In adults, widely distributed but predominant in the heart.

It localises to the nucleus. Transcriptional activator that binds 5'-GATA-3'-containing motifs within gene promoters. Regulates cardiac-specific transcription during embryogenesis and thereby cardiogenesis. This chain is GATA-binding factor 6-B (gata6-b), found in Xenopus laevis (African clawed frog).